The primary structure comprises 357 residues: 4-hydroxy-3-methylbut-2-en-1-yl diphosphate synthase (flavodoxin) (357 aa).

Residues cysteine 264, cysteine 267, cysteine 299, and glutamate 306 each contribute to the [4Fe-4S] cluster site.

This sequence belongs to the IspG family. [4Fe-4S] cluster serves as cofactor.

The catalysed reaction is (2E)-4-hydroxy-3-methylbut-2-enyl diphosphate + oxidized [flavodoxin] + H2O + 2 H(+) = 2-C-methyl-D-erythritol 2,4-cyclic diphosphate + reduced [flavodoxin]. Its pathway is isoprenoid biosynthesis; isopentenyl diphosphate biosynthesis via DXP pathway; isopentenyl diphosphate from 1-deoxy-D-xylulose 5-phosphate: step 5/6. Functionally, converts 2C-methyl-D-erythritol 2,4-cyclodiphosphate (ME-2,4cPP) into 1-hydroxy-2-methyl-2-(E)-butenyl 4-diphosphate. This Campylobacter jejuni subsp. jejuni serotype O:2 (strain ATCC 700819 / NCTC 11168) protein is 4-hydroxy-3-methylbut-2-en-1-yl diphosphate synthase (flavodoxin).